We begin with the raw amino-acid sequence, 257 residues long: uncharacterized protein (257 aa).

The helical transmembrane segment at 6-26 (IFWLNLAAIIIISIVVSGGMF) threads the bilayer.

This sequence belongs to the staphylococcal tandem lipoprotein family.

It is found in the cell membrane. This is an uncharacterized protein from Staphylococcus aureus (strain Mu50 / ATCC 700699).